Reading from the N-terminus, the 342-residue chain is Ribosomal RNA small subunit methyltransferase C (342 aa).

The protein belongs to the methyltransferase superfamily. RsmC family. Monomer.

The protein localises to the cytoplasm. The catalysed reaction is guanosine(1207) in 16S rRNA + S-adenosyl-L-methionine = N(2)-methylguanosine(1207) in 16S rRNA + S-adenosyl-L-homocysteine + H(+). Functionally, specifically methylates the guanine in position 1207 of 16S rRNA in the 30S particle. In Salmonella heidelberg (strain SL476), this protein is Ribosomal RNA small subunit methyltransferase C.